The chain runs to 688 residues: DNA-directed RNA polymerase subunit beta' (688 aa).

Zn(2+)-binding residues include cysteine 69, cysteine 71, cysteine 87, and cysteine 90. Positions 493, 495, and 497 each coordinate Mg(2+).

The protein belongs to the RNA polymerase beta' chain family. RpoC1 subfamily. In terms of assembly, in plastids the minimal PEP RNA polymerase catalytic core is composed of four subunits: alpha, beta, beta', and beta''. When a (nuclear-encoded) sigma factor is associated with the core the holoenzyme is formed, which can initiate transcription. The cofactor is Mg(2+). Zn(2+) is required as a cofactor.

It localises to the plastid. The protein localises to the chloroplast. The enzyme catalyses RNA(n) + a ribonucleoside 5'-triphosphate = RNA(n+1) + diphosphate. In terms of biological role, DNA-dependent RNA polymerase catalyzes the transcription of DNA into RNA using the four ribonucleoside triphosphates as substrates. In Chloranthus spicatus (Chulantree), this protein is DNA-directed RNA polymerase subunit beta'.